A 327-amino-acid chain; its full sequence is Apoptosis facilitator Bcl-2-like protein 14 (327 aa).

S44 carries the phosphoserine modification. Residues 212–226 (IVELLKYSGDQLERK) carry the BH3 motif. A BH2 motif is present at residues 308-315 (WIQQHGGW).

This sequence belongs to the Bcl-2 family. Phosphorylated by MELK, leading to inhibit its pro-apoptotic function. In terms of tissue distribution, isoform 1 is widely expressed. Isoform 2 is testis-specific.

The protein localises to the cytoplasm. Its subcellular location is the cytosol. The protein resides in the endomembrane system. In terms of biological role, plays a role in apoptosis. The protein is Apoptosis facilitator Bcl-2-like protein 14 (BCL2L14) of Homo sapiens (Human).